A 245-amino-acid chain; its full sequence is Biosynthetic peptidoglycan transglycosylase (245 aa).

A helical membrane pass occupies residues 19–41 (CLRWVLAAPLLFAAASVLQVLFL).

This sequence belongs to the glycosyltransferase 51 family.

It localises to the cell inner membrane. It carries out the reaction [GlcNAc-(1-&gt;4)-Mur2Ac(oyl-L-Ala-gamma-D-Glu-L-Lys-D-Ala-D-Ala)](n)-di-trans,octa-cis-undecaprenyl diphosphate + beta-D-GlcNAc-(1-&gt;4)-Mur2Ac(oyl-L-Ala-gamma-D-Glu-L-Lys-D-Ala-D-Ala)-di-trans,octa-cis-undecaprenyl diphosphate = [GlcNAc-(1-&gt;4)-Mur2Ac(oyl-L-Ala-gamma-D-Glu-L-Lys-D-Ala-D-Ala)](n+1)-di-trans,octa-cis-undecaprenyl diphosphate + di-trans,octa-cis-undecaprenyl diphosphate + H(+). Its pathway is cell wall biogenesis; peptidoglycan biosynthesis. Its function is as follows. Peptidoglycan polymerase that catalyzes glycan chain elongation from lipid-linked precursors. The protein is Biosynthetic peptidoglycan transglycosylase of Xanthomonas oryzae pv. oryzae (strain KACC10331 / KXO85).